The chain runs to 84 residues: Toxin BmKaTx16 (84 aa).

An N-terminal signal peptide occupies residues 1 to 19 (MNYLVMISFALLLMTGVES). One can recognise an LCN-type CS-alpha/beta domain in the interval 21-83 (RDAYIAKPHN…VPIRVPGKCH (63 aa)). 4 disulfides stabilise this stretch: Cys-31–Cys-82, Cys-35–Cys-55, Cys-41–Cys-65, and Cys-45–Cys-67. Arg-84 is a propeptide (removed by a carboxypeptidase).

This sequence belongs to the long (4 C-C) scorpion toxin superfamily. Sodium channel inhibitor family. Alpha subfamily. In terms of tissue distribution, expressed by the venom gland.

Its subcellular location is the secreted. Alpha toxins bind voltage-independently at site-3 of sodium channels (Nav) and inhibit the inactivation of the activated channels, thereby blocking neuronal transmission. The polypeptide is Toxin BmKaTx16 (Olivierus martensii (Manchurian scorpion)).